A 256-amino-acid chain; its full sequence is Type III pantothenate kinase (256 aa).

6 to 13 (DVGNTNIV) is a binding site for ATP. 107-110 (GADR) lines the substrate pocket. Asp-109 serves as the catalytic Proton acceptor. Residue Asp-129 participates in K(+) binding. Thr-132 lines the ATP pocket. Position 184 (Thr-184) interacts with substrate.

It belongs to the type III pantothenate kinase family. Homodimer. NH4(+) serves as cofactor. The cofactor is K(+).

The protein localises to the cytoplasm. It carries out the reaction (R)-pantothenate + ATP = (R)-4'-phosphopantothenate + ADP + H(+). The protein operates within cofactor biosynthesis; coenzyme A biosynthesis; CoA from (R)-pantothenate: step 1/5. Catalyzes the phosphorylation of pantothenate (Pan), the first step in CoA biosynthesis. The sequence is that of Type III pantothenate kinase from Pelotomaculum thermopropionicum (strain DSM 13744 / JCM 10971 / SI).